The following is a 255-amino-acid chain: Taurine import ATP-binding protein TauB (255 aa).

One can recognise an ABC transporter domain in the interval Leu-2 to Ser-229. Gly-34–Thr-41 provides a ligand contact to ATP.

Belongs to the ABC transporter superfamily. Taurine importer (TC 3.A.1.17.1) family. The complex is composed of two ATP-binding proteins (TauB), two transmembrane proteins (TauC) and a solute-binding protein (TauA).

It localises to the cell inner membrane. The enzyme catalyses taurine(out) + ATP + H2O = taurine(in) + ADP + phosphate + H(+). Part of the ABC transporter complex TauABC involved in taurine import. Responsible for energy coupling to the transport system. The sequence is that of Taurine import ATP-binding protein TauB from Shigella flexneri serotype 5b (strain 8401).